The chain runs to 467 residues: MDRKGIVLGSKLAVFSMILLWHRHGVDQPRNPWSDGPEFITQCPIRPCGNFTYQVILFEEEGTLWWHAHSDFDRATVHGAIVIHPKHGTTFPFNKPDKEIPIILSEWWNDDVENVLDEAKRTGGDQGNTYLLRVINTGLTNDMFFAVAGHCLTVVSIDARYTKPLTVDYIMIAPGQTMDVLLEANRTLGSNSRYYMAARAFITLPVDTIPFNNSTATAIVEYTDSPTARPPGPPEFPLLLPAIKDEDAAMAFVDERMLIDIDVNFLPCDTTNATNKLCKGPQGNQFAASLNNVSFESPAIDVLDAYYYGSGRGVYEEDFPNKPVNAFVNPTGDNGGRPLLTKRGTKVKVVEYGTVVEVVFQDLSSENHPMHLHGFAFYVVGRGSGTFDERRDPATYNLVDPPFQNTVSVPKSSWAAIRFRADNPGVWFMHCHFDRHVVWGMDTVFIVKDGKTPQAQMLPRPPNMPEC.

Plastocyanin-like domains follow at residues 7 to 88 (VLGS…PKHG), 98 to 225 (KEIP…YTDS), and 318 to 451 (DFPN…KDGK). The Cu cation site is built by His22, His24, His67, and His69. The Cu cation site is built by His368, His371, His373, His430, Cys431, His432, His436, and Met441.

This sequence belongs to the multicopper oxidase family. Requires Cu cation as cofactor.

It localises to the secreted. It is found in the extracellular space. The protein localises to the apoplast. The catalysed reaction is 4 hydroquinone + O2 = 4 benzosemiquinone + 2 H2O. Functionally, lignin degradation and detoxification of lignin-derived products. The protein is Putative laccase-16 (LAC16) of Oryza sativa subsp. japonica (Rice).